Consider the following 215-residue polypeptide: Peroxiredoxin-5, mitochondrial (215 aa).

The N-terminal 53 residues, 1 to 53 (MGLAGVCVLRRSAGYILGGAAGQSVAATAAARRRSEGGWASGGVRSFSRAAAA), are a transit peptide targeting the mitochondrion. Residues 57–215 (IKVGDAIPAV…SLAPSIISQL (159 aa)) form the Thioredoxin domain. Lys76 bears the N6-acetyllysine mark. Lys84 is subject to N6-acetyllysine; alternate. The residue at position 84 (Lys84) is an N6-succinyllysine; alternate. Cys101 serves as the catalytic Cysteine sulfenic acid (-SOH) intermediate. Cys101 carries the S-palmitoyl cysteine lipid modification. The cysteines at positions 101 and 205 are disulfide-linked. N6-succinyllysine is present on Lys117. A phosphoserine mark is found at Ser172 and Ser183. Positions 213 to 215 (SQL) match the Microbody targeting signal motif.

The protein belongs to the peroxiredoxin family. Prx5 subfamily. In terms of assembly, monomer. In terms of processing, S-palmitoylated. Palmitoylation occurs on the active site, inhibiting its reactivity; therefore PRDX5 palmitoylation status determines its antioxidant capacity. S-palmitoylated. Depalmitoylated by ABHD10.

Its subcellular location is the mitochondrion. It is found in the cytoplasm. It localises to the peroxisome matrix. It catalyses the reaction a hydroperoxide + [thioredoxin]-dithiol = an alcohol + [thioredoxin]-disulfide + H2O. In terms of biological role, thiol-specific peroxidase that catalyzes the reduction of hydrogen peroxide and organic hydroperoxides to water and alcohols, respectively. Plays a role in cell protection against oxidative stress by detoxifying peroxides and as sensor of hydrogen peroxide-mediated signaling events. This chain is Peroxiredoxin-5, mitochondrial (PRDX5), found in Papio hamadryas (Hamadryas baboon).